We begin with the raw amino-acid sequence, 531 residues long: Large neutral amino acids transporter small subunit 2 (531 aa).

The segment at 1-29 (MEKGARQRNNTAKNHPGSDTSPEAEASSG) is disordered. The Cytoplasmic segment spans residues 1–43 (MEKGARQRNNTAKNHPGSDTSPEAEASSGGGGVALKKEIGLVS). The span at 7–21 (QRNNTAKNHPGSDTS) shows a compositional bias: polar residues. 4 positions are modified to phosphoserine: serine 18, serine 21, serine 27, and serine 28. The chain crosses the membrane as a helical span at residues 44-64 (ACGIIVGNIIGSGIFVSPKGV). Isoleucine 52 is a binding site for L-leucine. Residues 65 to 72 (LENAGSVG) are Extracellular-facing. The chain crosses the membrane as a helical span at residues 73–94 (LALIVWIVTGIITAVGALCYAE). The Cytoplasmic portion of the chain corresponds to 95-115 (LGVTIPKSGGDYSYVKDIFGG). A helical membrane pass occupies residues 116 to 148 (LAGFLRLWIAVLVIYPTNQAVIALTFSNYVLQP). L-tryptophan is bound at residue asparagine 133. Residues 149-156 (LFPTCFPP) lie on the Extracellular side of the membrane. The chain crosses the membrane as a helical span at residues 157-177 (ESGLRLLAAICLLLLTWVNCS). Residues 178 to 180 (SVR) are Cytoplasmic-facing. Residues 181–209 (WATRVQDIFTAGKLLALALIIIMGIVQIC) traverse the membrane as a helical segment. Topologically, residues 210–229 (KGEFFWLEPKNAFENFQEPD) are extracellular. The helical transmembrane segment at 230–251 (IGLVALAFLQGSFAYGGWNFLN) threads the bilayer. Glycine 245 contributes to the L-leucine binding site. The Cytoplasmic portion of the chain corresponds to 252 to 264 (YVTEELVDPYKNL). A helical transmembrane segment spans residues 265-286 (PRAIFISIPLVTFVYVFANIAY). At 287 to 311 (VTAMSPQELLASNAVAVTFGEKLLG) the chain is on the extracellular side. A helical membrane pass occupies residues 312–337 (VMAWIMPISVALSTFGGVNGSLFTSS). The Cytoplasmic portion of the chain corresponds to 338 to 363 (RLFFAGAREGHLPSVLAMIHVKRCTP). A helical transmembrane segment spans residues 364-381 (IPALLFTCLSTLLMLVTS). Residues 382-385 (DMYT) lie on the Extracellular side of the membrane. A helical membrane pass occupies residues 386–407 (LINYVGFINYLFYGVTVAGQIV). Residue asparagine 394 participates in L-tryptophan binding. Residues 408-422 (LRWKKPDIPRPIKVS) lie on the Cytoplasmic side of the membrane. 2 consecutive transmembrane segments (helical) span residues 423–445 (LLFP…WSEP) and 446–465 (VVCG…YFLG). The Cytoplasmic segment spans residues 466 to 531 (VYWQHKPKCF…VKDPDSEEQP (66 aa)). A disordered region spans residues 499-531 (NSGAEETTDDLEEQHKPIFKPTPVKDPDSEEQP). A Phosphoserine modification is found at serine 527.

The protein belongs to the amino acid-polyamine-organocation (APC) superfamily. L-type amino acid transporter (LAT) (TC 2.A.3.8) family. In terms of assembly, disulfide-linked heterodimer composed of the catalytic light chain subunit SLC7A8 and the heavy chain subunit SLC3A2. SLC3A2 acts as a chaperone for correct plasma membrane trafficking and stabilization of SLC7A8 and modulates the substrate affinity and specificity of SLC7A8. ICAM-1 associates with the heterodimer SLC3A2/SLC7A8; facilitates leucine uptake. As to expression, strongly expressed in kidney and small intestine. Moderately present in placenta, ovary and brain. Expressed in the inner ear.

The protein localises to the cell membrane. It is found in the basolateral cell membrane. The enzyme catalyses L-histidine(in) + L-phenylalanine(out) = L-histidine(out) + L-phenylalanine(in). It catalyses the reaction L-tryptophan(in) + L-phenylalanine(out) = L-tryptophan(out) + L-phenylalanine(in). The catalysed reaction is L-isoleucine(in) + L-phenylalanine(out) = L-isoleucine(out) + L-phenylalanine(in). It carries out the reaction L-valine(in) + L-phenylalanine(out) = L-valine(out) + L-phenylalanine(in). The enzyme catalyses L-leucine(in) + L-phenylalanine(out) = L-leucine(out) + L-phenylalanine(in). It catalyses the reaction L-glutamine(in) + L-phenylalanine(out) = L-glutamine(out) + L-phenylalanine(in). The catalysed reaction is L-cysteine(in) + L-phenylalanine(out) = L-cysteine(out) + L-phenylalanine(in). It carries out the reaction L-phenylalanine(out) + L-methionine(in) = L-phenylalanine(in) + L-methionine(out). The enzyme catalyses L-leucine(out) + L-methionine(in) = L-leucine(in) + L-methionine(out). It catalyses the reaction L-cysteine(out) + L-methionine(in) = L-cysteine(in) + L-methionine(out). The catalysed reaction is S-methylmercury-L-cysteine(out) + L-methionine(in) = S-methylmercury-L-cysteine(in) + L-methionine(out). It carries out the reaction S-methylmercury-L-cysteine(in) + L-leucine(out) = S-methylmercury-L-cysteine(out) + L-leucine(in). The enzyme catalyses S-methylmercury-L-cysteine(in) + L-phenylalanine(out) = S-methylmercury-L-cysteine(out) + L-phenylalanine(in). It catalyses the reaction L-phenylalanine(out) + L-serine(in) = L-phenylalanine(in) + L-serine(out). The catalysed reaction is L-phenylalanine(out) + glycine(in) = L-phenylalanine(in) + glycine(out). It carries out the reaction L-phenylalanine(out) + L-alanine(in) = L-phenylalanine(in) + L-alanine(out). The enzyme catalyses L-tryptophan(in) = L-tryptophan(out). It catalyses the reaction 3,3',5-triiodo-L-thyronine(out) = 3,3',5-triiodo-L-thyronine(in). The catalysed reaction is 3,3'-diiodo-L-thyronine(out) = 3,3'-diiodo-L-thyronine(in). It carries out the reaction L-dopa(out) + L-phenylalanine(in) = L-dopa(in) + L-phenylalanine(out). Associates with SLC3A2 to form a functional heterodimeric complex that translocates small and large neutral amino acids with broad specificity and a stoichiometry of 1:1. Functions as amino acid antiporter mediating the influx of extracellular essential amino acids mainly in exchange with the efflux of highly concentrated intracellular amino acids. Has relatively symmetrical selectivities but strongly asymmetrical substrate affinities at both the intracellular and extracellular sides of the transporter. This asymmetry allows SLC7A8 to regulate intracellular amino acid pools (mM concentrations) by exchange with external amino acids (uM concentration range), equilibrating the relative concentrations of different amino acids across the plasma membrane instead of mediating their net uptake. May play an essential role in the reabsorption of neutral amino acids from the epithelial cells to the bloodstream in the kidney. Involved in the uptake of methylmercury (MeHg) when administered as the L-cysteine or D,L-homocysteine complexes, and hence plays a role in metal ion homeostasis and toxicity. Involved in the cellular activity of small molecular weight nitrosothiols, via the stereoselective transport of L-nitrosocysteine (L-CNSO) across the transmembrane. Imports the thyroid hormone diiodothyronine (T2) and to a smaller extent triiodothyronine (T3) but not rT 3 or thyroxine (T4). Mediates the uptake of L-DOPA. May participate in auditory function. This Mus musculus (Mouse) protein is Large neutral amino acids transporter small subunit 2 (Slc7a8).